The chain runs to 97 residues: Large ribosomal subunit protein uL23 (97 aa).

It belongs to the universal ribosomal protein uL23 family. Part of the 50S ribosomal subunit. Contacts protein L29, and trigger factor when it is bound to the ribosome.

Functionally, one of the early assembly proteins it binds 23S rRNA. One of the proteins that surrounds the polypeptide exit tunnel on the outside of the ribosome. Forms the main docking site for trigger factor binding to the ribosome. This Clostridium perfringens (strain SM101 / Type A) protein is Large ribosomal subunit protein uL23.